The chain runs to 327 residues: S-adenosylmethionine/S-adenosylhomocysteine transporter (327 aa).

10 consecutive transmembrane segments (helical) span residues 22-42, 53-73, 85-105, 114-134, 143-163, 165-185, 202-222, 240-260, 271-291, and 294-314; these read CDMA…SFAL, LFVT…LLLC, IMPI…LEFI, TACF…YVQL, LGGL…GGSE, VAEW…ATCL, SLSM…LSLI, LFLQ…YNLF, FLSF…WLLL, and SFPP…RLIY. Residues 34–157 enclose the EamA 1 domain; the sequence is FIWSSSFALS…LGLVSYLVYL (124 aa). Positions 189 to 313 constitute an EamA 2 domain; that stretch reads GWTLLRKLGR…GFMVLGCRLI (125 aa).

The protein belongs to the drug/metabolite transporter (DMT) superfamily. 10 TMS drug/metabolite exporter (DME) (TC 2.A.7.3) family.

The protein resides in the cell membrane. Transports S-adenosylmethionine (SAM) and S-adenosylhomocysteine (SAH). Allows bacteria to acquire SAM from the eukaryotic host cell and to likely remove the toxic by-product SAH. The polypeptide is S-adenosylmethionine/S-adenosylhomocysteine transporter (Chlamydia trachomatis serovar D (strain ATCC VR-885 / DSM 19411 / UW-3/Cx)).